The sequence spans 54 residues: QSFKNAEPGIKLCGREFIRAVIYTCGGSRWEGSPGMSSKCCTYGCTRKDISILC.

A Pyrrolidone carboxylic acid modification is found at glutamine 1. Cystine bridges form between cysteine 13/cysteine 41, cysteine 25/cysteine 54, and cysteine 40/cysteine 45.

Belongs to the insulin family. Heterodimer of a B chain and an A chain linked by two disulfide bonds.

The protein resides in the secreted. In terms of biological role, the function of relaxin in an oviparous species is not yet known. This Squalus acanthias (Spiny dogfish) protein is Relaxin.